We begin with the raw amino-acid sequence, 249 residues long: Flavodoxin/ferredoxin--NADP reductase (249 aa).

The region spanning 2–102 is the FAD-binding FR-type domain; it reads NTWITAKIIK…KKSYGFFTLN (101 aa). FAD is bound by residues 51–54, tyrosine 67, 75–77, and threonine 117; these read RAYS and QLT. Residues 144–145, 174–175, arginine 185, and 215–217 contribute to the NADP(+) site; these read VR, SR, and NPD. An FAD-binding site is contributed by 248 to 249; the sequence is YW.

The protein belongs to the ferredoxin--NADP reductase type 1 family. FAD is required as a cofactor.

It is found in the cytoplasm. The catalysed reaction is 2 reduced [2Fe-2S]-[ferredoxin] + NADP(+) + H(+) = 2 oxidized [2Fe-2S]-[ferredoxin] + NADPH. It carries out the reaction reduced [flavodoxin] + NADP(+) = oxidized [flavodoxin] + NADPH + 2 H(+). In terms of biological role, transports electrons between flavodoxin or ferredoxin and NADPH. In Buchnera aphidicola subsp. Baizongia pistaciae (strain Bp), this protein is Flavodoxin/ferredoxin--NADP reductase (fpr).